Here is a 207-residue protein sequence, read N- to C-terminus: Urease accessory protein UreG (207 aa).

Position 12–19 (12–19) interacts with GTP; it reads GPVGAGKT.

This sequence belongs to the SIMIBI class G3E GTPase family. UreG subfamily. As to quaternary structure, homodimer. UreD, UreF and UreG form a complex that acts as a GTP-hydrolysis-dependent molecular chaperone, activating the urease apoprotein by helping to assemble the nickel containing metallocenter of UreC. The UreE protein probably delivers the nickel.

Its subcellular location is the cytoplasm. Facilitates the functional incorporation of the urease nickel metallocenter. This process requires GTP hydrolysis, probably effectuated by UreG. This is Urease accessory protein UreG from Cereibacter sphaeroides (strain KD131 / KCTC 12085) (Rhodobacter sphaeroides).